Reading from the N-terminus, the 856-residue chain is Genome polyprotein (856 aa).

The 144-residue stretch at 141-284 (KLTESQMNHL…QGVLNSMVQF (144 aa)) folds into the Peptidase S30 domain. Catalysis depends on for P1 proteinase activity residues histidine 192, aspartate 201, and serine 235. The Involved in virions binding and aphid transmission motif lies at 592–594 (PTK). Residues 618-740 (LYIAKQGYCY…ESEIKHYRVG (123 aa)) form the Peptidase C6 domain. Residues cysteine 626 and histidine 699 each act as for helper component proteinase activity in the active site.

The protein belongs to the potyviridae genome polyprotein family. In terms of processing, genome polyprotein of potyviruses undergoes post-translational proteolytic processing by the main proteinase NIa-pro resulting in the production of at least ten individual proteins. The P1 proteinase and the HC-pro cleave only their respective C-termini autocatalytically. 6K1 is essential for proper proteolytic separation of P3 from CI.

The enzyme catalyses Hydrolyzes a Gly-|-Gly bond at its own C-terminus, commonly in the sequence -Tyr-Xaa-Val-Gly-|-Gly, in the processing of the potyviral polyprotein.. Functionally, required for aphid transmission and also has proteolytic activity. Only cleaves a Gly-Gly dipeptide at its own C-terminus. Interacts with virions and aphid stylets. Acts as a suppressor of RNA-mediated gene silencing, also known as post-transcriptional gene silencing (PTGS), a mechanism of plant viral defense that limits the accumulation of viral RNAs. May have RNA-binding activity. The chain is Genome polyprotein from Potato virus Y (strain C) (PVY).